The following is a 112-amino-acid chain: Evasin P1095 (112 aa).

Positions 1-23 (MELNAFTILQIAVFIAVGYHANT) are cleaved as a signal peptide. 3 disulfides stabilise this stretch: C48–C66, C52–C68, and C62–C79. N51 carries N-linked (GlcNAc...) asparagine glycosylation. Positions 89-112 (GDPNDDPKINEATPQTQIFEKKRK) are disordered.

It localises to the secreted. In terms of biological role, salivary chemokine-binding protein which binds to host chemokine CXCL8. In Ixodes ricinus (Common tick), this protein is Evasin P1095.